The primary structure comprises 427 residues: Probable protein phosphatase 2C 64 (427 aa).

The segment at 1–36 is disordered; the sequence is MGNCVARSGTAVDAGGDGGEDGKRRRRRWKAPREDQ. One can recognise a PPM-type phosphatase domain in the interval 53–331; sequence TATVYTQQGR…DDCAVVCLYL (279 aa). Mn(2+) is bound by residues Asp-89, Gly-90, Asp-276, and Asp-322.

This sequence belongs to the PP2C family. It depends on Mg(2+) as a cofactor. Mn(2+) serves as cofactor.

It catalyses the reaction O-phospho-L-seryl-[protein] + H2O = L-seryl-[protein] + phosphate. It carries out the reaction O-phospho-L-threonyl-[protein] + H2O = L-threonyl-[protein] + phosphate. This is Probable protein phosphatase 2C 64 from Oryza sativa subsp. japonica (Rice).